We begin with the raw amino-acid sequence, 727 residues long: Alpha-1,3-galactosidase A (727 aa).

Positions 220 to 241 are disordered; the sequence is ATNRTWRTSNPVFPERHEDHRP. Over residues 221–230 the composition is skewed to polar residues; that stretch reads TNRTWRTSNP. PbH1 repeat units follow at residues 336–358, 461–483, 484–506, 517–538, 551–572, and 574–603; these read KGTV…NIHG, TPTV…LVTT, RRPV…YISS, VRNV…IFFD, HRNV…LSGR, and VGGL…RVGD.

This sequence belongs to the glycosyl hydrolase 110 family. A subfamily.

The enzyme catalyses Hydrolysis of terminal, non-reducing branched (1-&gt;3)-alpha-D-galactosidic residues, producing free D-galactose.. The catalysed reaction is Hydrolysis of terminal, non-reducing alpha-D-galactose residues in alpha-D-galactosides, including galactose oligosaccharides, galactomannans and galactolipids.. In terms of biological role, alpha-galactosidase that specifically removes branched alpha-1,3-linked galactose residues present in blood group B antigens. Has no activity toward linear alpha-1,3-linked galactose residues. The sequence is that of Alpha-1,3-galactosidase A (glaA) from Peterkaempfera griseoplana (Streptacidiphilus griseoplanus).